A 694-amino-acid chain; its full sequence is Junctophilin-2 (694 aa).

Over 1–672 (MSGGRFDFDD…EVEVEEVPNT (672 aa)) the chain is Cytoplasmic. MORN repeat units follow at residues 14–36 (YCGG…KGQG), 38–59 (YSGS…SGNT), 60–79 (FEGY…TKGR), 82–104 (YKGE…SSGA), 106–128 (YEGT…DGGT), and 129–151 (YQGQ…PYGM). A phosphoserine mark is found at Ser-162 and Ser-165. Disordered regions lie at residues 164–192 (SSLR…ALPS) and 231–278 (RAES…AAPF). The segment covering 176–189 (APDSPASPAADGPA) has biased composition (low complexity). Over residues 235–244 (RTSVGSQRSR) the composition is skewed to polar residues. The span at 250-267 (SDLSSGASDAASTASLGE) shows a compositional bias: low complexity. MORN repeat units follow at residues 290-312 (YMGE…SGLR) and 313-335 (YEGE…DGHR). Positions 350–364 (KRRVLPLKSNKVRQK) match the Bipartite nuclear localization signal motif. Phosphoserine is present on residues Ser-445, Ser-447, and Ser-466. The segment at 448 to 663 (LLEPPDRGAA…KEAAQAAEAE (216 aa)) is disordered. Over residues 467–476 (PQLHERETPR) the composition is skewed to basic and acidic residues. At Thr-474 the chain carries Phosphothreonine. A compositionally biased stretch (pro residues) spans 478 to 491 (EGGPPSPAGTPPQP). Phosphoserine is present on Ser-483. At Thr-487 the chain carries Phosphothreonine. The short motif at 492–496 (KRPRP) is the Nuclear localization signal element. A compositionally biased stretch (low complexity) spans 522 to 540 (SRPATPAAAGAGRRSPARP). A phosphoserine mark is found at Ser-536, Ser-542, Ser-596, and Ser-600. Residues 589 to 610 (PEAADPDSAPASPATAPGQAPA) show a composition bias toward low complexity. The chain crosses the membrane as a helical; Anchor for type IV membrane protein span at residues 673 to 693 (VLICMVILLNIGLAILFVHLL).

It belongs to the junctophilin family. Interacts with TRPC3. Interacts with BAG5 and HSPA8; the interaction with HSPA8 is increased in the presence of BAG5. Junctophilin-2 N-terminal fragment: Interacts with MEF2C. Proteolytically cleaved by calpain in response to cardiac stress. The major cleavage site takes place at the C-terminus and leads to the release of the Junctophilin-2 N-terminal fragment chain (JP2NT). Post-translationally, phosphorylation on Ser-165, probably by PKC, affects RYR1-mediated calcium ion release, interaction with TRPC3, and skeletal muscle myotubule development.

The protein localises to the cell membrane. The protein resides in the sarcoplasmic reticulum membrane. Its subcellular location is the endoplasmic reticulum membrane. It is found in the nucleus. Functionally, membrane-binding protein that provides a structural bridge between the plasma membrane and the sarcoplasmic reticulum and is required for normal excitation-contraction coupling in cardiomyocytes. Provides a structural foundation for functional cross-talk between the cell surface and intracellular Ca(2+) release channels by maintaining the 12-15 nm gap between the sarcolemma and the sarcoplasmic reticulum membranes in the cardiac dyads. Necessary for proper intracellular Ca(2+) signaling in cardiac myocytes via its involvement in ryanodine receptor-mediated calcium ion release. Contributes to the construction of skeletal muscle triad junctions. Its function is as follows. Transcription repressor required to safeguard against the deleterious effects of cardiac stress. Generated following cleavage of the Junctophilin-2 chain by calpain in response to cardiac stress in cardiomyocytes. Following cleavage and release from the membrane, translocates to the nucleus, binds DNA and represses expression of genes implicated in cell growth and differentiation, hypertrophy, inflammation and fibrosis. Modifies the transcription profile and thereby attenuates pathological remodeling in response to cardiac stress. Probably acts by competing with MEF2 transcription factors and TATA-binding proteins. The sequence is that of Junctophilin-2 (JPH2) from Oryctolagus cuniculus (Rabbit).